The chain runs to 147 residues: D-aminoacyl-tRNA deacylase (147 aa).

The Gly-cisPro motif, important for rejection of L-amino acids motif lies at 137-138; it reads GP.

Belongs to the DTD family. As to quaternary structure, homodimer.

Its subcellular location is the cytoplasm. The catalysed reaction is glycyl-tRNA(Ala) + H2O = tRNA(Ala) + glycine + H(+). It carries out the reaction a D-aminoacyl-tRNA + H2O = a tRNA + a D-alpha-amino acid + H(+). Functionally, an aminoacyl-tRNA editing enzyme that deacylates mischarged D-aminoacyl-tRNAs. Also deacylates mischarged glycyl-tRNA(Ala), protecting cells against glycine mischarging by AlaRS. Acts via tRNA-based rather than protein-based catalysis; rejects L-amino acids rather than detecting D-amino acids in the active site. By recycling D-aminoacyl-tRNA to D-amino acids and free tRNA molecules, this enzyme counteracts the toxicity associated with the formation of D-aminoacyl-tRNA entities in vivo and helps enforce protein L-homochirality. This chain is D-aminoacyl-tRNA deacylase, found in Exiguobacterium sp. (strain ATCC BAA-1283 / AT1b).